The primary structure comprises 34 residues: Photosystem II reaction center protein T (34 aa).

The helical transmembrane segment at 3–23 (ALVYTFLLVSTLGIIFFAIFF) threads the bilayer.

The protein belongs to the PsbT family. In terms of assembly, PSII is composed of 1 copy each of membrane proteins PsbA, PsbB, PsbC, PsbD, PsbE, PsbF, PsbH, PsbI, PsbJ, PsbK, PsbL, PsbM, PsbT, PsbY, PsbZ, Psb30/Ycf12, at least 3 peripheral proteins of the oxygen-evolving complex and a large number of cofactors. It forms dimeric complexes.

It localises to the plastid. It is found in the chloroplast thylakoid membrane. Its function is as follows. Found at the monomer-monomer interface of the photosystem II (PS II) dimer, plays a role in assembly and dimerization of PSII. PSII is a light-driven water plastoquinone oxidoreductase, using light energy to abstract electrons from H(2)O, generating a proton gradient subsequently used for ATP formation. The polypeptide is Photosystem II reaction center protein T (Solanum lycopersicum (Tomato)).